The following is a 132-amino-acid chain: T-cell receptor alpha chain V region CTL-F3 (132 aa).

The N-terminal stretch at methionine 1–glycine 22 is a signal peptide. The tract at residues aspartate 23–serine 114 is v segment. Asparagine 43 carries N-linked (GlcNAc...) asparagine glycosylation. A disulfide bridge connects residues cysteine 44 and cysteine 111. The tract at residues asparagine 115–proline 132 is j segment.

The protein is T-cell receptor alpha chain V region CTL-F3 of Mus musculus (Mouse).